A 258-amino-acid polypeptide reads, in one-letter code: Pimeloyl-[acyl-carrier protein] methyl ester esterase (258 aa).

Substrate contacts are provided by residues Trp-22, 84–85, and 145–149; these read SL and FLAIQ. Catalysis depends on Ser-84, which acts as the Nucleophile. Residues Asp-209 and His-238 contribute to the active site. His-238 is a binding site for substrate.

Belongs to the AB hydrolase superfamily. Carboxylesterase BioH family. As to quaternary structure, monomer.

It localises to the cytoplasm. The catalysed reaction is 6-carboxyhexanoyl-[ACP] methyl ester + H2O = 6-carboxyhexanoyl-[ACP] + methanol + H(+). It functions in the pathway cofactor biosynthesis; biotin biosynthesis. The physiological role of BioH is to remove the methyl group introduced by BioC when the pimeloyl moiety is complete. It allows to synthesize pimeloyl-ACP via the fatty acid synthetic pathway through the hydrolysis of the ester bonds of pimeloyl-ACP esters. The protein is Pimeloyl-[acyl-carrier protein] methyl ester esterase of Pseudoalteromonas atlantica (strain T6c / ATCC BAA-1087).